A 108-amino-acid polypeptide reads, in one-letter code: UPF0102 protein Sama_3355 (108 aa).

It belongs to the UPF0102 family.

The chain is UPF0102 protein Sama_3355 from Shewanella amazonensis (strain ATCC BAA-1098 / SB2B).